A 197-amino-acid polypeptide reads, in one-letter code: Imidazoleglycerol-phosphate dehydratase (197 aa).

It belongs to the imidazoleglycerol-phosphate dehydratase family.

It localises to the cytoplasm. It catalyses the reaction D-erythro-1-(imidazol-4-yl)glycerol 3-phosphate = 3-(imidazol-4-yl)-2-oxopropyl phosphate + H2O. It functions in the pathway amino-acid biosynthesis; L-histidine biosynthesis; L-histidine from 5-phospho-alpha-D-ribose 1-diphosphate: step 6/9. The sequence is that of Imidazoleglycerol-phosphate dehydratase from Syntrophobacter fumaroxidans (strain DSM 10017 / MPOB).